Reading from the N-terminus, the 176-residue chain is NAD(P)H-quinone oxidoreductase subunit 6, chloroplastic (176 aa).

The next 5 membrane-spanning stretches (helical) occupy residues 10–30 (ILML…VLLT), 33–53 (IYSA…YFLL), 60–80 (VAQL…AVMF), 95–115 (IGDG…MTTI), and 152–172 (FYLP…GAIT).

It belongs to the complex I subunit 6 family. In terms of assembly, NDH is composed of at least 16 different subunits, 5 of which are encoded in the nucleus.

It is found in the plastid. The protein resides in the chloroplast thylakoid membrane. The catalysed reaction is a plastoquinone + NADH + (n+1) H(+)(in) = a plastoquinol + NAD(+) + n H(+)(out). It carries out the reaction a plastoquinone + NADPH + (n+1) H(+)(in) = a plastoquinol + NADP(+) + n H(+)(out). NDH shuttles electrons from NAD(P)H:plastoquinone, via FMN and iron-sulfur (Fe-S) centers, to quinones in the photosynthetic chain and possibly in a chloroplast respiratory chain. The immediate electron acceptor for the enzyme in this species is believed to be plastoquinone. Couples the redox reaction to proton translocation, and thus conserves the redox energy in a proton gradient. This chain is NAD(P)H-quinone oxidoreductase subunit 6, chloroplastic (ndhG), found in Triticum aestivum (Wheat).